Here is a 267-residue protein sequence, read N- to C-terminus: Putative carbamate hydrolase RutD (267 aa).

Residues Pro-14–Leu-115 enclose the AB hydrolase-1 domain.

Belongs to the AB hydrolase superfamily. Hydrolase RutD family.

The catalysed reaction is carbamate + 2 H(+) = NH4(+) + CO2. In terms of biological role, involved in pyrimidine catabolism. May facilitate the hydrolysis of carbamate, a reaction that can also occur spontaneously. This Cronobacter turicensis (strain DSM 18703 / CCUG 55852 / LMG 23827 / z3032) protein is Putative carbamate hydrolase RutD.